A 246-amino-acid chain; its full sequence is E3 ubiquitin-protein ligase MARCHF2 (246 aa).

An RING-CH-type zinc finger spans residues 56 to 116; sequence DTPSDGPFCR…ELCHTEFAVE (61 aa). Positions 56–116 are required for inhibition of HIV-1 virus production and VSV G protein expression; that stretch reads DTPSDGPFCR…ELCHTEFAVE (61 aa). C64, C67, C80, C82, H90, C93, C106, and C109 together coordinate Zn(2+). Residues 121–246 form a required for interaction with IKBKG region; sequence PLTEWLKDPG…LKKVAEETPV (126 aa). Helical transmembrane passes span 138–158 and 175–195; these read LCCD…SGWL and AVGL…WTLV.

In terms of assembly, interacts with STX6; the interaction promotes MARCHF2-mediated ubiquitination and degradation of CFTR. Interacts with MARCHF3. Interacts with GOPC/CAL; the interaction leads to CFTR ubiquitination and degradation. Interacts with CFTR; the interaction leads to CFTR ubiqtuitination and degradation. Interacts (via PDZ domain) with DLG1 (via PDZ domains); the interaction leads to DLG1 ubiqtuitination and degradation. Interacts with ERGIC3. Interacts with ADRB2. Interacts with IKBKG/NEMO; during the late stages of macrophage viral and bacterial infection; the interaction leads to ubiquitination and degradation of IKBKG/NEMO. As to expression, broadly expressed.

It is found in the endoplasmic reticulum membrane. Its subcellular location is the lysosome membrane. The protein localises to the endosome membrane. The protein resides in the golgi apparatus membrane. It localises to the cytoplasm. It is found in the cell membrane. It catalyses the reaction S-ubiquitinyl-[E2 ubiquitin-conjugating enzyme]-L-cysteine + [acceptor protein]-L-lysine = [E2 ubiquitin-conjugating enzyme]-L-cysteine + N(6)-ubiquitinyl-[acceptor protein]-L-lysine.. The protein operates within protein modification; protein ubiquitination. In terms of biological role, E3 ubiquitin-protein ligase that may mediate ubiquitination of TFRC and CD86, and promote their subsequent endocytosis and sorting to lysosomes via multivesicular bodies. E3 ubiquitin ligases accept ubiquitin from an E2 ubiquitin-conjugating enzyme in the form of a thioester and then directly transfer the ubiquitin to targeted substrates. Together with GOPC/CAL mediates the ubiquitination and lysosomal degradation of CFTR. Ubiquitinates and therefore mediates the degradation of DLG1. Regulates the intracellular trafficking and secretion of alpha1-antitrypsin/SERPINA1 and HP/haptoglobin via ubiquitination and degradation of the cargo receptor ERGIC3. Negatively regulates the antiviral and antibacterial immune response by repression of the NF-kB and type 1 IFN signaling pathways, via MARCHF2-mediated K48-linked polyubiquitination of IKBKG/NEMO, resulting in its proteasomal degradation. May be involved in endosomal trafficking through interaction with STX6. (Microbial infection) Positively regulates the degradation of Vesicular stomatitis virus (VSV) G protein via the lysosomal degradation pathway. Represses HIV-1 viral production and may inhibit the translocation of HIV-1 env to the cell surface, resulting in decreased viral cell-cell transmission. The polypeptide is E3 ubiquitin-protein ligase MARCHF2 (Homo sapiens (Human)).